Here is a 1260-residue protein sequence, read N- to C-terminus: Ankyrin repeat and sterile alpha motif domain-containing protein 1B (1260 aa).

ANK repeat units lie at residues 2 to 31 (GKDQELLEAARTGNVALVEKLLSGRKGGIL), 58 to 87 (SGYTALHHAALNGHKDIVLKLLQFEASTNV), 91 to 120 (KGYFPIHLAAWKGDVEIVKILIHHGPSHSR), 127 to 156 (ENETALHCAAQYGHSEVVAVLLEELTDPTI), 160 to 189 (KLETPLDLAALYGRLRVVKMIISAHPNLMS), 193 to 222 (RKHTPLHLAARNGHKAVVQVLLEAGMDVSC), and 225 to 254 (EKGSALHEAALFGKVDVVRVLLETGIDANI). A disordered region spans residues 298–326 (HAQEDTAQETRLSSPAQSPSQKTKSETVT). Residues 306–326 (ETRLSSPAQSPSQKTKSETVT) are compositionally biased toward polar residues. 5 positions are modified to phosphoserine: Ser-310, Ser-311, Ser-315, Ser-354, and Ser-365. Disordered regions lie at residues 368-402 (ELGKNGSQSVRTSSTINLSPGEVEDEEEDPNSCGP), 491-513 (PGTGHHRNSSTGPTPDCSPPSPD), and 556-642 (GCTS…EASL). Over residues 372–385 (NGSQSVRTSSTINL) the composition is skewed to polar residues. Thr-504 is subject to Phosphothreonine. Ser-508 and Ser-511 each carry phosphoserine. The segment covering 556 to 575 (GCTSFTSSPPVSPPTSSVET) has biased composition (low complexity). Residues 576-588 (TEIKNEGAEHTDD) show a composition bias toward basic and acidic residues. Ser-739 carries the post-translational modification Phosphoserine. The segment at 754-778 (VNWSKSSTAERSSKDNSERTPSFTS) is disordered. The residue at position 773 (Thr-773) is a Phosphothreonine. Ser-775 is modified (phosphoserine). SAM domains lie at 810 to 876 (CPVQ…LPKM) and 884 to 949 (YHPT…RLHE). A Phosphotyrosine modification is found at Tyr-901. Residues 935 to 938 (HRKR) carry the Nuclear localization signal motif. A disordered region spans residues 946–989 (RLHEDPPQKPPRSITLREPSGNHTPPQLSPSLSQSTYTTGGSLD). A compositionally biased stretch (low complexity) spans 969-984 (TPPQLSPSLSQSTYTT). Ser-974 carries the phosphoserine modification. Tyr-1007 is modified (phosphotyrosine). One can recognise a PID domain in the interval 1056–1213 (IFQSCDYKAF…SFENKPSKPI (158 aa)). Positions 1197–1217 (HSSTLPESFENKPSKPIPKPR) are disordered.

As to quaternary structure, interacts with EPHA8. Isoform 2 interacts with COIL. Isoform 3 interacts with DLG4. Nuclear translocation of isoform 3 requires an NMDAR-dependent proteolytic cleavage. A 35 kDa N-terminal form shuttles to the nucleus. As to expression, isoform 3 is brain specific and highly enriched in the postsynaptic densities (PSDs), especially in cortical, striatal and hippocampal PSDs.

The protein localises to the cytoplasm. The protein resides in the nucleus. Its subcellular location is the postsynaptic density. It localises to the cell projection. It is found in the dendritic spine. The protein localises to the cajal body. In terms of biological role, isoform 2 may participate in the regulation of nucleoplasmic coilin protein interactions in neuronal and transformed cells. Functionally, isoform 3 can regulate global protein synthesis by altering nucleolar numbers. The sequence is that of Ankyrin repeat and sterile alpha motif domain-containing protein 1B (Anks1b) from Rattus norvegicus (Rat).